The following is a 671-amino-acid chain: K(+)-insensitive pyrophosphate-energized proton pump (671 aa).

A run of 5 helical transmembrane segments spans residues 3-23 (SLIFIAPLAGVISLVFAAFFA), 57-77 (TIAVVSIILSFLILFLLDDGL), 79-99 (IAIGFLAGAISSAAAGYIGMS), 128-148 (AVTGLAVVGLALLGTSSFYIL), and 156-176 (VGFGFGASLISLFARVGGGIF). Lys-178 serves as a coordination point for substrate. Residues Asp-181, Asp-185, Asn-208, and Asp-211 each contribute to the Mg(2+) site. The next 6 membrane-spanning stretches (helical) occupy residues 223–243 (LFETYVVTSLAAMLLGSLIIG), 249–269 (ILYPLVLGSVAIFASIISVFF), 285–305 (GVGGSAIISLIAFYFVTNSLM), 310–330 (LFYATVVGIIITVLMVIITEY), 366–386 (LVPTVVIVIGILISYFIVGGA), and 391–411 (IGLYGIAIAAVAMLSTTGMIV). A Mg(2+)-binding site is contributed by Asp-421. The next 4 helical transmembrane spans lie at 452–472 (AVTKGYAIGSAALGALALFAD), 490–510 (VVLAGLLLGALLPFVFSAVTM), 558–578 (MAMPGFLAVLVPLLVGLILGP), and 580–600 (ALAGLLIGLIVVGFMLALMMD). Positions 607, 633, and 637 each coordinate Ca(2+). A substrate-binding site is contributed by Lys-640. A helical transmembrane segment spans residues 646–666 (ALNALIKVVNMVAILFSSLII).

This sequence belongs to the H(+)-translocating pyrophosphatase (TC 3.A.10) family. K(+)-insensitive subfamily. As to quaternary structure, homodimer. Requires Mg(2+) as cofactor.

The protein localises to the cell membrane. It catalyses the reaction diphosphate + H2O + H(+)(in) = 2 phosphate + 2 H(+)(out). Its function is as follows. Proton pump that utilizes the energy of pyrophosphate hydrolysis as the driving force for proton movement across the membrane. Generates a proton motive force. The protein is K(+)-insensitive pyrophosphate-energized proton pump of Methanosarcina acetivorans (strain ATCC 35395 / DSM 2834 / JCM 12185 / C2A).